A 197-amino-acid polypeptide reads, in one-letter code: dITP/XTP pyrophosphatase (197 aa).

Residue Thr-8 to Lys-13 participates in substrate binding. Mg(2+) is bound by residues Glu-42 and Asp-71. Asp-71 serves as the catalytic Proton acceptor. Residues Ser-72, Phe-154–Asp-157, Lys-177, and His-182–Arg-183 each bind substrate.

This sequence belongs to the HAM1 NTPase family. In terms of assembly, homodimer. Requires Mg(2+) as cofactor.

The enzyme catalyses XTP + H2O = XMP + diphosphate + H(+). It carries out the reaction dITP + H2O = dIMP + diphosphate + H(+). It catalyses the reaction ITP + H2O = IMP + diphosphate + H(+). Functionally, pyrophosphatase that catalyzes the hydrolysis of nucleoside triphosphates to their monophosphate derivatives, with a high preference for the non-canonical purine nucleotides XTP (xanthosine triphosphate), dITP (deoxyinosine triphosphate) and ITP. Seems to function as a house-cleaning enzyme that removes non-canonical purine nucleotides from the nucleotide pool, thus preventing their incorporation into DNA/RNA and avoiding chromosomal lesions. The protein is dITP/XTP pyrophosphatase of Oceanobacillus iheyensis (strain DSM 14371 / CIP 107618 / JCM 11309 / KCTC 3954 / HTE831).